We begin with the raw amino-acid sequence, 342 residues long: Thymidylate synthase (342 aa).

Residues Arg-31 and 156–157 each bind dUMP; that span reads RR. Cys-176 (nucleophile) is an active-site residue. Residues 196-199, Asn-207, and 237-239 contribute to the dUMP site; these read RSGD and HVY. (6R)-5,10-methylene-5,6,7,8-tetrahydrofolate is bound at residue Asp-199. Ala-341 lines the (6R)-5,10-methylene-5,6,7,8-tetrahydrofolate pocket.

It belongs to the thymidylate synthase family. Bacterial-type ThyA subfamily. Homodimer.

The protein localises to the cytoplasm. It carries out the reaction dUMP + (6R)-5,10-methylene-5,6,7,8-tetrahydrofolate = 7,8-dihydrofolate + dTMP. Its pathway is pyrimidine metabolism; dTTP biosynthesis. Its function is as follows. Catalyzes the reductive methylation of 2'-deoxyuridine-5'-monophosphate (dUMP) to 2'-deoxythymidine-5'-monophosphate (dTMP) while utilizing 5,10-methylenetetrahydrofolate (mTHF) as the methyl donor and reductant in the reaction, yielding dihydrofolate (DHF) as a by-product. This enzymatic reaction provides an intracellular de novo source of dTMP, an essential precursor for DNA biosynthesis. This Haloferax volcanii (Halobacterium volcanii) protein is Thymidylate synthase.